Reading from the N-terminus, the 643-residue chain is Protein tramtrack, beta isoform (643 aa).

A BTB domain is found at 33–98 (TDVTLAVEGQ…MYRGEVSVDQ (66 aa)). Disordered stretches follow at residues 118–148 (EVNDDKPSPAAAAAGAGATGSESTATTPQLQ) and 171–300 (ANAG…GLDT). Lys-123 is covalently cross-linked (Glycyl lysine isopeptide (Lys-Gly) (interchain with G-Cter in ubiquitin)). A compositionally biased stretch (low complexity) spans 125-145 (SPAAAAAGAGATGSESTATTP). Residues 176-187 (TPTLPVQPSLLS) show a composition bias toward polar residues. Residues 192-201 (PKRKRGRPRK) are compositionally biased toward basic residues. Lys-201 is covalently cross-linked (Glycyl lysine isopeptide (Lys-Gly) (interchain with G-Cter in ubiquitin)). Residues 254–285 (HTDDLNESRDSLPSKRSKNSKDHRVVSHHEDN) show a composition bias toward basic and acidic residues. Glycyl lysine isopeptide (Lys-Gly) (interchain with G-Cter in ubiquitin) cross-links involve residues Lys-355, Lys-397, Lys-418, Lys-457, Lys-478, and Lys-480. 2 consecutive C2H2-type zinc fingers follow at residues 508-531 (YRCKVCSRVYTHISNFCRHYVTSH) and 538-561 (YPCPFCFKEFTRKDNMTAHVKIIH). Residue Lys-545 forms a Glycyl lysine isopeptide (Lys-Gly) (interchain with G-Cter in ubiquitin) linkage. The tract at residues 584–643 (GVSGASTPPPPDLSGQNSNQSLPATSNALSTSSSSSTSSSSGSLGPLTTSAPPAPAAAAQ) is disordered. Low complexity predominate over residues 604 to 643 (SLPATSNALSTSSSSSTSSSSGSLGPLTTSAPPAPAAAAQ).

In terms of assembly, can form homodimers. Interacts with Trl in vivo via the BTB domain. Interacts with phyl. Interacts with Usp47. In terms of processing, polyubiquitinated by sina. Polyubiquitin linkage is mainly through 'Lys-48', but linkage through 'Lys-63' also occurs. Deubiquitination by Usp47 leads to its stabilization.

The protein localises to the nucleus. Functionally, binds to a number of sites in the transcriptional regulatory region of ftz. Isoform beta is required to repress inappropriate segmentation gene transcription and repress genes incompatible with development of photoreceptor cell fates. Probable repressor of the transcription of the segmentation genes ftz, eve, h, odd, run, and en. Inhibits Trl-dependent activation of eve. May bind to the region AGGGC/TGG. Degradation of ttk is directed by binding of sinah or sina, via the adapter molecule phyl which binds to the BTB domain of ttk. A second method of degradation exists that is phyl-independent, this is mediated by recognition of motifs in the C-terminus of ttk. The protein is Protein tramtrack, beta isoform (ttk) of Drosophila melanogaster (Fruit fly).